The sequence spans 164 residues: MAETKATLTNRLLAVKHNSGKSYSEIAEETGLTNVYVAQLFRRQAQLKPDTALKLRAVLPELSDELLGEMMRPPMRSYDPNLIQEPSVYRLNEAVMHFGESIKEIINEEFGDGIMSAIDFYCSVDKVKGVDGKDRVVVTFDGKYLPYSEQKTEHMVSRLRQNGN.

Active-site residues include Arg-90, Glu-93, and Ser-116.

The protein belongs to the cyanase family.

The enzyme catalyses cyanate + hydrogencarbonate + 3 H(+) = NH4(+) + 2 CO2. In terms of biological role, catalyzes the reaction of cyanate with bicarbonate to produce ammonia and carbon dioxide. This is Cyanate hydratase from Ricinus communis (Castor bean).